Here is a 1068-residue protein sequence, read N- to C-terminus: Probable ATPase FE772_23070 (1068 aa).

Glycine 217–threonine 224 is an ATP binding site.

Functionally, involved in defense against bacteriophages. When this probable 4 gene operon (bGSDM-FE772_23060-FE772_23065-FE772_23070) is inserted into E.coli it provides nearly 100-fold protection against phages T5 and T6 and about 8-fold against phage T4. The operon without bGSDM no longer protects against phage. Probably a nucleotide hydrolase, possibly of ATP. This is Probable ATPase FE772_23070 from Lysobacter enzymogenes.